Here is a 211-residue protein sequence, read N- to C-terminus: Transcription antitermination protein NusB (211 aa).

Residues proline 152–lysine 211 form a disordered region. Positions asparagine 175–proline 188 are enriched in polar residues.

This sequence belongs to the NusB family.

In terms of biological role, involved in transcription antitermination. Required for transcription of ribosomal RNA (rRNA) genes. Binds specifically to the boxA antiterminator sequence of the ribosomal RNA (rrn) operons. This Chloroherpeton thalassium (strain ATCC 35110 / GB-78) protein is Transcription antitermination protein NusB.